The following is a 208-amino-acid chain: Small ribosomal subunit protein uS4 (208 aa).

The S4 RNA-binding domain maps to 98–158 (RRLDNIVYRL…EKSRKVASIN (61 aa)).

The protein belongs to the universal ribosomal protein uS4 family. Part of the 30S ribosomal subunit. Contacts protein S5. The interaction surface between S4 and S5 is involved in control of translational fidelity.

Functionally, one of the primary rRNA binding proteins, it binds directly to 16S rRNA where it nucleates assembly of the body of the 30S subunit. With S5 and S12 plays an important role in translational accuracy. The sequence is that of Small ribosomal subunit protein uS4 from Geotalea daltonii (strain DSM 22248 / JCM 15807 / FRC-32) (Geobacter daltonii).